Consider the following 209-residue polypeptide: Uracil phosphoribosyltransferase (209 aa).

5-phospho-alpha-D-ribose 1-diphosphate is bound by residues R79, R104, and 131-139 (DPMLATGGS). Uracil is bound by residues V194 and 199 to 201 (GDA). D200 is a 5-phospho-alpha-D-ribose 1-diphosphate binding site.

The protein belongs to the UPRTase family. Mg(2+) is required as a cofactor.

The catalysed reaction is UMP + diphosphate = 5-phospho-alpha-D-ribose 1-diphosphate + uracil. The protein operates within pyrimidine metabolism; UMP biosynthesis via salvage pathway; UMP from uracil: step 1/1. With respect to regulation, allosterically activated by GTP. Catalyzes the conversion of uracil and 5-phospho-alpha-D-ribose 1-diphosphate (PRPP) to UMP and diphosphate. The protein is Uracil phosphoribosyltransferase of Bacillus cereus (strain Q1).